The sequence spans 632 residues: Pentatricopeptide repeat-containing protein ELI1, chloroplastic (632 aa).

The N-terminal 19 residues, 1–19 (MASSPLLATSLPQNQLSTT), are a transit peptide targeting the chloroplast. PPR repeat units follow at residues 94–128 (DLFL…EINP), 129–159 (NEFT…GLGI), 160–194 (DPYV…SLVS), 196–221 (TAMI…MCER), 222–256 (DIVS…GKPK), 258–292 (DEIT…RIRL), 293–323 (NVKV…TPRK), 324–354 (DIVA…MQGI), 360–395 (TDIT…GIKP), and 396–426 (KIEH…MNMD). The tract at residues 431–506 (LWSSVLGSCK…EPGISTIEIE (76 aa)) is type E motif. The required for function in RNA editing stretch occupies residues 497–512 (EPGISTIEIENKVHEF). Positions 507–537 (NKVHEFRAGDREHSKSKEIYTMLRKISERIK) are type E(+) motif. A type DYW motif region spans residues 538 to 632 (SHGYVPNTNT…DGSCSCGDFW (95 aa)).

This sequence belongs to the PPR family. PCMP-H subfamily. It depends on Zn(2+) as a cofactor.

It is found in the plastid. The protein localises to the chloroplast. Plays a major role in single RNA editing events in chloroplasts. Acts as a site-recognition transacting factor involved in the edition of the site 5 of ndhB1 and ndhB2 (ndhB1-5 and ndhB2-5 sites corresponding to cytidine-830), which are plastid-encoded subunits of the NADH-plastoquinone oxidoreductase. May provide the catalytic activity for editing site conversion. This Arabidopsis thaliana (Mouse-ear cress) protein is Pentatricopeptide repeat-containing protein ELI1, chloroplastic.